Consider the following 585-residue polypeptide: Rab GTPase-binding effector protein 2 (585 aa).

Ala-2 is subject to N-acetylalanine. Positions 27–183 (QEGAKVEAES…ELIQEIQRRP (157 aa)) form a coiled coil. Disordered stretches follow at residues 178 to 265 (EIQR…ASLV), 381 to 408 (ENQG…EESL), and 491 to 515 (EEQS…EEAQ). Ser-188, Ser-192, Ser-198, and Ser-202 each carry phosphoserine. Positions 288–540 (NQWEQLQLEG…QAELETSEQV (253 aa)) form a coiled coil. Residues 491-501 (EEQSKAKRQEV) show a composition bias toward basic and acidic residues.

It belongs to the rabaptin family. Heterodimer with RABGEF1. The dimer binds RAB5A that has been activated by GTP-binding. Interacts with SDCCAG8; this interaction is important for ciliogenesis regulation. Interacts with RAB4; this interaction may mediate VEGFR2 cell surface expression.

It is found in the cytoplasm. Its subcellular location is the early endosome. The protein resides in the cytoskeleton. The protein localises to the microtubule organizing center. It localises to the centrosome. It is found in the cilium basal body. In terms of biological role, plays a role in membrane trafficking and in homotypic early endosome fusion. Participates in arteriogenesis by regulating vascular endothelial growth factor receptor 2/VEGFR2 cell surface expression and endosomal trafficking. By interacting with SDCCAG8, localizes to centrosomes and plays a critical role in ciliogenesis. This chain is Rab GTPase-binding effector protein 2 (RABEP2), found in Bos taurus (Bovine).